The primary structure comprises 1278 residues: Mediator of RNA polymerase II transcription subunit 16 (1278 aa).

Positions 1–10 are enriched in acidic residues; sequence MNQQNPEEEV. Disordered stretches follow at residues 1–21, 530–557, and 839–861; these read MNQQ…GGGI, TKDF…GDEK, and SAGT…SPAT. Residues 547–557 show a composition bias toward basic and acidic residues; the sequence is APKEPDSGDEK. Residues 841–861 show a composition bias toward polar residues; it reads GTGSNRNNVTSPTQNASSPAT.

This sequence belongs to the plant Mediator complex subunit 16 family. In terms of assembly, component of the Mediator complex.

The protein localises to the nucleus. Functionally, component of the Mediator complex, a coactivator involved in the regulated transcription of nearly all RNA polymerase II-dependent genes. Mediator functions as a bridge to convey information from gene-specific regulatory proteins to the basal RNA polymerase II transcription machinery. The Mediator complex, having a compact conformation in its free form, is recruited to promoters by direct interactions with regulatory proteins and serves for the assembly of a functional preinitiation complex with RNA polymerase II and the general transcription factors. Involved in the regulation of the circadian clock, in the control of flowering time, in freezing- and osmotic-stress tolerance and in both salicylic acid- and jasmonate-mediated defense gene expression. The protein is Mediator of RNA polymerase II transcription subunit 16 (MED16) of Arabidopsis thaliana (Mouse-ear cress).